We begin with the raw amino-acid sequence, 273 residues long: MPEMPEVETVRRTLRPLVVGKTIDHVDIWYDKVITGDPETFKRELKGKTFTAVDRYAKFLLFRLGDLTVVSHLRMEGKYHLTTWDAPVDKHEHLQFAFTDGSSLRYADVRKFGRLQLVETGTEFQVTGLKNLGVEANSPEFRLDYFEKGLKKRSMNIKSLLMSQTLVAGLGNIYVDEVLWQSRINPLTPANELTKDQVKQLHSAINETIEEATKYGGTTVHSFLNAEGGAGHYQEKLKVYGKEGQPCPRCGEDFVKIKISGRGTTYCLHCQKR.

Residue proline 2 is the Schiff-base intermediate with DNA of the active site. Glutamate 3 serves as the catalytic Proton donor. The Proton donor; for beta-elimination activity role is filled by lysine 58. Histidine 91, arginine 110, and arginine 153 together coordinate DNA. An FPG-type zinc finger spans residues 238–272 (KVYGKEGQPCPRCGEDFVKIKISGRGTTYCLHCQK). The active-site Proton donor; for delta-elimination activity is arginine 262.

The protein belongs to the FPG family. In terms of assembly, monomer. Requires Zn(2+) as cofactor.

The enzyme catalyses Hydrolysis of DNA containing ring-opened 7-methylguanine residues, releasing 2,6-diamino-4-hydroxy-5-(N-methyl)formamidopyrimidine.. It carries out the reaction 2'-deoxyribonucleotide-(2'-deoxyribose 5'-phosphate)-2'-deoxyribonucleotide-DNA = a 3'-end 2'-deoxyribonucleotide-(2,3-dehydro-2,3-deoxyribose 5'-phosphate)-DNA + a 5'-end 5'-phospho-2'-deoxyribonucleoside-DNA + H(+). Functionally, involved in base excision repair of DNA damaged by oxidation or by mutagenic agents. Acts as a DNA glycosylase that recognizes and removes damaged bases. Has a preference for oxidized purines, such as 7,8-dihydro-8-oxoguanine (8-oxoG). Has AP (apurinic/apyrimidinic) lyase activity and introduces nicks in the DNA strand. Cleaves the DNA backbone by beta-delta elimination to generate a single-strand break at the site of the removed base with both 3'- and 5'-phosphates. In Lactobacillus delbrueckii subsp. bulgaricus (strain ATCC 11842 / DSM 20081 / BCRC 10696 / JCM 1002 / NBRC 13953 / NCIMB 11778 / NCTC 12712 / WDCM 00102 / Lb 14), this protein is Formamidopyrimidine-DNA glycosylase.